The primary structure comprises 194 residues: Protein A43 (194 aa).

Positions 1–22 (MMMMKWIISILTMSIMPVLAYS) are cleaved as a signal peptide. Residues 23 to 165 (SSIFRFHSED…YKDINDKYND (143 aa)) are Extracellular-facing. Residues Asn65 and Asn114 are each glycosylated (N-linked (GlcNAc...) asparagine; by host). The chain crosses the membrane as a helical span at residues 166-186 (IYDFTAICMLIASTLIVTIYV). The Cytoplasmic segment spans residues 187–194 (FKKIKMNS).

It belongs to the orthopoxvirus OPG172 protein family.

It localises to the host membrane. It is found in the host cell surface. This is Protein A43 (OPG172) from Homo sapiens (Human).